The sequence spans 283 residues: MTIVRKPQWLQKKINPAAHAGMEGLLGELRLHTVCQEARCPNITECFRERQATFLILGAACTRLCSFCNVTKQTPIPPDPGEPDRVAEAIRRLGLSHVVITSPTRDDLPDGGAGHYAETVAAIRSASPATTVELLIPDYLGNRESLARVVASAPAIIGHNVETVPRLYQIRAGADYGRSLGVLRTLRELDPVVRSKSGIMLGLGEAEEEVLAVFADLRSVGCSYLSIGQYLAPSKSHHPVREFIPPECFERYRAAALATGFAHVESGPYVRSSYHAARYDGQL.

[4Fe-4S] cluster is bound by residues Cys35, Cys40, Cys46, Cys61, Cys65, Cys68, and Ser273. In terms of domain architecture, Radical SAM core spans 47–262 (FRERQATFLI…RAAALATGFA (216 aa)).

Belongs to the radical SAM superfamily. Lipoyl synthase family. The cofactor is [4Fe-4S] cluster.

It is found in the cytoplasm. The enzyme catalyses [[Fe-S] cluster scaffold protein carrying a second [4Fe-4S](2+) cluster] + N(6)-octanoyl-L-lysyl-[protein] + 2 oxidized [2Fe-2S]-[ferredoxin] + 2 S-adenosyl-L-methionine + 4 H(+) = [[Fe-S] cluster scaffold protein] + N(6)-[(R)-dihydrolipoyl]-L-lysyl-[protein] + 4 Fe(3+) + 2 hydrogen sulfide + 2 5'-deoxyadenosine + 2 L-methionine + 2 reduced [2Fe-2S]-[ferredoxin]. Its pathway is protein modification; protein lipoylation via endogenous pathway; protein N(6)-(lipoyl)lysine from octanoyl-[acyl-carrier-protein]: step 2/2. In terms of biological role, catalyzes the radical-mediated insertion of two sulfur atoms into the C-6 and C-8 positions of the octanoyl moiety bound to the lipoyl domains of lipoate-dependent enzymes, thereby converting the octanoylated domains into lipoylated derivatives. This chain is Lipoyl synthase, found in Geobacter metallireducens (strain ATCC 53774 / DSM 7210 / GS-15).